An 837-amino-acid polypeptide reads, in one-letter code: Tuftelin-interacting protein 11 (837 aa).

Residues 1 to 13 are compositionally biased toward basic and acidic residues; sequence MSLSHLYRDGEGH. 3 disordered regions span residues 1–31, 54–73, and 85–136; these read MSLS…DWDL, WAER…RARD, and LKKG…AGGT. The interval 1–50 is required for interaction with DHX15; sequence MSLSHLYRDGEGHMDDDEDERENFEITDWDLQNEFNPNRQRHWQTKEEAT. Ser2 is modified (phosphoserine). Residues 14 to 28 are compositionally biased toward acidic residues; the sequence is MDDDEDERENFEITD. Residues 54-64 are compositionally biased toward basic and acidic residues; sequence WAERDSDEERP. Ser59 and Ser98 each carry phosphoserine. Over residues 91–102 the composition is skewed to acidic residues; sequence EEAELEDSDDEE. A compositionally biased stretch (basic and acidic residues) spans 103 to 116; sequence KPVKQDEFPKDFGP. Position 144 is a phosphoserine (Ser144). A G-patch domain is found at 149–195; sequence TKGIGQKLLQKMGYVPGRGLGKNAQGIINPIEAKQRKGKGAVGAYGS. 2 disordered regions span residues 183–236 and 287–313; these read QRKG…KKKP and HKHS…ARAP. At Ser210 the chain carries Phosphoserine. Residues 217–231 show a composition bias toward basic and acidic residues; sequence EFQKELSQWRKDPSG. The short motif at 700–705 is the Nuclear localization signal element; that stretch reads VKDKFN. Residues 710-734 are required for nuclear speckle localization; sequence IMNRAVSSNVGAYMQPGAREHIAYL.

Belongs to the TFP11/STIP family. In terms of assembly, identified in the spliceosome C complex. Found in the Intron Large (IL) complex, a post-mRNA release spliceosomal complex containing the excised intron, U2, U5 and U6 snRNPs, and splicing factors. Interacts with TUFT1. Interacts with DHX15; indicative for a recruitment of DHX15 to the IL complex. Interacts with GCFC2.

The protein resides in the cytoplasm. The protein localises to the nucleus. Its function is as follows. Involved in pre-mRNA splicing, specifically in spliceosome disassembly during late-stage splicing events. Intron turnover seems to proceed through reactions in two lariat-intron associated complexes termed Intron Large (IL) and Intron Small (IS). In cooperation with DHX15 seems to mediate the transition of the U2, U5 and U6 snRNP-containing IL complex to the snRNP-free IS complex leading to efficient debranching and turnover of excised introns. May play a role in the differentiation of ameloblasts and odontoblasts or in the forming of the enamel extracellular matrix. The polypeptide is Tuftelin-interacting protein 11 (TFIP11) (Bos taurus (Bovine)).